We begin with the raw amino-acid sequence, 279 residues long: Diaminopimelate epimerase (279 aa).

Residues N11 and N63 each contribute to the substrate site. The active-site Proton donor is C72. Substrate-binding positions include 73–74, N161, N194, and 212–213; these read GN and ER. C221 serves as the catalytic Proton acceptor. 222–223 lines the substrate pocket; the sequence is GT.

Belongs to the diaminopimelate epimerase family. As to quaternary structure, homodimer.

The protein localises to the cytoplasm. It carries out the reaction (2S,6S)-2,6-diaminopimelate = meso-2,6-diaminopimelate. The protein operates within amino-acid biosynthesis; L-lysine biosynthesis via DAP pathway; DL-2,6-diaminopimelate from LL-2,6-diaminopimelate: step 1/1. In terms of biological role, catalyzes the stereoinversion of LL-2,6-diaminopimelate (L,L-DAP) to meso-diaminopimelate (meso-DAP), a precursor of L-lysine and an essential component of the bacterial peptidoglycan. The sequence is that of Diaminopimelate epimerase from Moorella thermoacetica (strain ATCC 39073 / JCM 9320).